Consider the following 372-residue polypeptide: MDVEERLSLVLRYPTEEVITVEELRELFQGGYKLNHYIGFEISGFIHIGTGVVSMSKVVDLQRAGVRTTVFLADIHSWLNNKLGGDLDTIRRVAVTYYVETFKRIIEVLGGDPDATRFVLGSDLYHHNDEYWFLLMDITRHLTLSQVRHSLTILGRKMGESIPLAYLVYPPLQVADVFALGAHIPHGGIDQRRAHILARQVADKIRFYPLTVDGKRIKPVALHHRLLPALNISSKPSSKEELSELKMSKSIPQSAIFVHDSPEEIRQKVAKAYCPPREVEYNPVLELLRIAAFREERKTPLVIKRPEKYGGDVEVWKYEELEAMYKEGKIHPADLKAVTAEALAALLEPVYKFFQGPGAKLLEEMRNIAITR.

5 residues coordinate L-tyrosine: Tyr-37, Tyr-169, Gln-173, Asp-176, and Gln-191. Residues 246–250 carry the 'KMSKS' region motif; it reads KMSKS. Lys-249 lines the ATP pocket.

The protein belongs to the class-I aminoacyl-tRNA synthetase family. TyrS type 4 subfamily. Homodimer.

Its subcellular location is the cytoplasm. It carries out the reaction tRNA(Tyr) + L-tyrosine + ATP = L-tyrosyl-tRNA(Tyr) + AMP + diphosphate + H(+). Functionally, catalyzes the attachment of tyrosine to tRNA(Tyr) in a two-step reaction: tyrosine is first activated by ATP to form Tyr-AMP and then transferred to the acceptor end of tRNA(Tyr). This chain is Tyrosine--tRNA ligase, found in Pyrobaculum calidifontis (strain DSM 21063 / JCM 11548 / VA1).